The sequence spans 567 residues: Urease subunit alpha (567 aa).

Residues 129 to 567 (GGIDTHIHFI…LPMAQRYFLF (439 aa)) form the Urease domain. His-134, His-136, and Lys-217 together coordinate Ni(2+). Lys-217 carries the post-translational modification N6-carboxylysine. His-219 serves as a coordination point for substrate. Ni(2+) is bound by residues His-246 and His-272. Catalysis depends on His-320, which acts as the Proton donor. A Ni(2+)-binding site is contributed by Asp-360.

It belongs to the metallo-dependent hydrolases superfamily. Urease alpha subunit family. In terms of assembly, heterotrimer of UreA (gamma), UreB (beta) and UreC (alpha) subunits. Three heterotrimers associate to form the active enzyme. The cofactor is Ni cation. Carboxylation allows a single lysine to coordinate two nickel ions.

Its subcellular location is the cytoplasm. The catalysed reaction is urea + 2 H2O + H(+) = hydrogencarbonate + 2 NH4(+). Its pathway is nitrogen metabolism; urea degradation; CO(2) and NH(3) from urea (urease route): step 1/1. The protein is Urease subunit alpha of Delftia acidovorans (strain DSM 14801 / SPH-1).